Reading from the N-terminus, the 465-residue chain is Endo-1,3-1,4-beta-glycanase EglC (465 aa).

Hemolysin-type calcium-binding repeat units follow at residues 33-50 (YGTAGNDSMWADSSVDVT), 105-122 (FGNSASNIISGGSGSQTI), and 123-140 (NGGAGNDVLTGAGGADTF). The region spanning 213–462 (LDRSVLTQTF…YVKAYSLDAD (250 aa)) is the GH16 domain. Residue Glu-349 is the Nucleophile of the active site. Residue Glu-354 is the Proton donor of the active site.

This sequence belongs to the glycosyl hydrolase 16 family.

Its subcellular location is the secreted. It functions in the pathway glycan metabolism; exopolysaccharide biosynthesis. In terms of biological role, cleaves high molecular weight succinoglycan to yield LMW succinoglycan. Dynamically regulates the molecular weight distribution of succinoglycan by cleaving nascent succinoglycan only during a limited period after its synthesis, perhaps before it undergoes a time-dependent change in its conformation or aggregation state. The sequence is that of Endo-1,3-1,4-beta-glycanase EglC (eglC) from Rhizobium meliloti (strain 1021) (Ensifer meliloti).